Reading from the N-terminus, the 684-residue chain is Threonine--tRNA ligase (684 aa).

Residues 1–66 (MTVPATDSWP…DTDAEVVPVA (66 aa)) enclose the TGS domain. The tract at residues 261 to 567 (DHRKLGSELD…LTEHYAGAFP (307 aa)) is catalytic. Residues cysteine 366, histidine 417, and histidine 544 each coordinate Zn(2+).

It belongs to the class-II aminoacyl-tRNA synthetase family. Homodimer. The cofactor is Zn(2+).

The protein resides in the cytoplasm. The catalysed reaction is tRNA(Thr) + L-threonine + ATP = L-threonyl-tRNA(Thr) + AMP + diphosphate + H(+). Catalyzes the attachment of threonine to tRNA(Thr) in a two-step reaction: L-threonine is first activated by ATP to form Thr-AMP and then transferred to the acceptor end of tRNA(Thr). Also edits incorrectly charged L-seryl-tRNA(Thr). The sequence is that of Threonine--tRNA ligase from Mycobacterium avium (strain 104).